The primary structure comprises 394 residues: Actin-related protein 2 (394 aa).

Position 1 is an N-acetylmethionine (Met1). ATP is bound by residues 160–162 (GDG) and 214–218 (RMIKE). At Lys299 the chain carries N6-acetyllysine. 305 to 310 (GGSTMY) serves as a coordination point for ATP. Residue Lys322 is modified to N6-acetyllysine.

It belongs to the actin family. ARP2 subfamily. Component of the Arp2/3 complex composed of ACTR2/ARP2, ACTR3/ARP3, ARPC1B/p41-ARC, ARPC2/p34-ARC, ARPC3/p21-ARC, ARPC4/p20-ARC and ARPC5/p16-ARC. Interacts with AVIL.

Its subcellular location is the cytoplasm. The protein resides in the cytoskeleton. It localises to the cell projection. It is found in the nucleus. ATP-binding component of the Arp2/3 complex, a multiprotein complex that mediates actin polymerization upon stimulation by nucleation-promoting factor (NPF). The Arp2/3 complex mediates the formation of branched actin networks in the cytoplasm, providing the force for cell motility. Seems to contact the pointed end of the daughter actin filament. In podocytes, required for the formation of lamellipodia downstream of AVIL and PLCE1 regulation. In addition to its role in the cytoplasmic cytoskeleton, the Arp2/3 complex also promotes actin polymerization in the nucleus, thereby regulating gene transcription and repair of damaged DNA. The Arp2/3 complex promotes homologous recombination (HR) repair in response to DNA damage by promoting nuclear actin polymerization, leading to drive motility of double-strand breaks (DSBs). The chain is Actin-related protein 2 (ACTR2) from Bos taurus (Bovine).